The sequence spans 943 residues: Isoleucine--tRNA ligase (943 aa).

The 'HIGH' region signature appears at 59–69 (PYANGRIHLGH). E577 contacts L-isoleucyl-5'-AMP. The 'KMSKS' region signature appears at 618-622 (KMSKS). Residue K621 participates in ATP binding. 4 residues coordinate Zn(2+): C906, C909, C926, and C929.

Belongs to the class-I aminoacyl-tRNA synthetase family. IleS type 1 subfamily. Monomer. It depends on Zn(2+) as a cofactor.

The protein resides in the cytoplasm. It catalyses the reaction tRNA(Ile) + L-isoleucine + ATP = L-isoleucyl-tRNA(Ile) + AMP + diphosphate. Its function is as follows. Catalyzes the attachment of isoleucine to tRNA(Ile). As IleRS can inadvertently accommodate and process structurally similar amino acids such as valine, to avoid such errors it has two additional distinct tRNA(Ile)-dependent editing activities. One activity is designated as 'pretransfer' editing and involves the hydrolysis of activated Val-AMP. The other activity is designated 'posttransfer' editing and involves deacylation of mischarged Val-tRNA(Ile). The protein is Isoleucine--tRNA ligase of Stenotrophomonas maltophilia (strain R551-3).